The primary structure comprises 138 residues: Large ribosomal subunit protein uL16 (138 aa).

Residues 1 to 15 show a composition bias toward basic residues; the sequence is MLSPKKVKYRKKQRG. The segment at 1 to 21 is disordered; it reads MLSPKKVKYRKKQRGRLSGEA.

This sequence belongs to the universal ribosomal protein uL16 family. Part of the 50S ribosomal subunit.

Its function is as follows. Binds 23S rRNA and is also seen to make contacts with the A and possibly P site tRNAs. This chain is Large ribosomal subunit protein uL16, found in Borreliella burgdorferi (strain ATCC 35210 / DSM 4680 / CIP 102532 / B31) (Borrelia burgdorferi).